Here is a 262-residue protein sequence, read N- to C-terminus: tRNA pseudouridine synthase A (262 aa).

Aspartate 51 acts as the Nucleophile in catalysis. Substrate is bound at residue tyrosine 109.

The protein belongs to the tRNA pseudouridine synthase TruA family. In terms of assembly, homodimer.

The enzyme catalyses uridine(38/39/40) in tRNA = pseudouridine(38/39/40) in tRNA. Functionally, formation of pseudouridine at positions 38, 39 and 40 in the anticodon stem and loop of transfer RNAs. The polypeptide is tRNA pseudouridine synthase A (Actinobacillus pleuropneumoniae serotype 3 (strain JL03)).